Reading from the N-terminus, the 168-residue chain is TGEKPYSCSDCGKCFTRRWNLSEHRKSHTGQKRFCCSVCGKGFSYHSQMKSHYRTHTGEKPCICSECGKSFTDHAGLRIHQKYHTGVKPFSCSECGKCFTRRSGLTAHLRIHTGEKPYTCTECGKCFTCRTDLARHLRIHTENKPFTCSQCEKSFASHSDLDRHHCLP.

C2H2-type zinc fingers lie at residues Y6–H28, F34–H56, C62–H84, F90–H112, Y118–H140, and F146–H165.

This sequence belongs to the krueppel C2H2-type zinc-finger protein family.

It localises to the nucleus. Functionally, may be involved in transcriptional regulation. The sequence is that of Gastrula zinc finger protein XlCGF42.1 from Xenopus laevis (African clawed frog).